A 221-amino-acid polypeptide reads, in one-letter code: Small ribosomal subunit protein eS8 (221 aa).

2 disordered regions span residues 1 to 41 (MGIS…LSSN) and 128 to 169 (TPAA…TLDP). Over residues 8-26 (MHKRRATGGKQKAWRKKRK) the composition is skewed to basic residues. Positions 146-169 (EETKKSNHVTRKLEKRKEGRTLDP) are enriched in basic and acidic residues.

It belongs to the eukaryotic ribosomal protein eS8 family.

This is Small ribosomal subunit protein eS8 (RPS8) from Zea mays (Maize).